We begin with the raw amino-acid sequence, 242 residues long: ATP synthase subunit a (242 aa).

A run of 6 helical transmembrane segments spans residues 29–49 (SSIY…LAFY), 84–104 (FIPL…LGMT), 114–134 (IIVT…VGFV), 140–160 (FLTL…MIVI), 181–201 (MAGH…MIYL), and 203–223 (FLPI…AILQ).

This sequence belongs to the ATPase A chain family. F-type ATPases have 2 components, CF(1) - the catalytic core - and CF(0) - the membrane proton channel. CF(1) has five subunits: alpha(3), beta(3), gamma(1), delta(1), epsilon(1). CF(0) has three main subunits: a(1), b(2) and c(9-12). The alpha and beta chains form an alternating ring which encloses part of the gamma chain. CF(1) is attached to CF(0) by a central stalk formed by the gamma and epsilon chains, while a peripheral stalk is formed by the delta and b chains.

It localises to the cell membrane. Key component of the proton channel; it plays a direct role in the translocation of protons across the membrane. The protein is ATP synthase subunit a of Rickettsia africae (strain ESF-5).